A 377-amino-acid chain; its full sequence is Benzylmalonyl-CoA dehydrogenase (377 aa).

FAD contacts are provided by residues 123 to 132 (ICMTEPNAGS), 156 to 158 (WIT), arginine 266, glutamine 277, and 363 to 365 (TSE).

The protein belongs to the acyl-CoA dehydrogenase family. In terms of assembly, homotetramer. It depends on FAD as a cofactor.

The catalysed reaction is (2-aminobenzyl)malonyl-CoA + O2 + H(+) = (E)-2-aminocinnamoyl-CoA + H2O2 + CO2. It catalyses the reaction benzylmalonyl-CoA + O2 + H(+) = (E)-cinnamoyl-CoA + H2O2 + CO2. Its function is as follows. Involved in degradation of indoleacetate, the most common member of the auxin class of plant hormones. Catalyzes the irreversible oxidative decarboxylation of (2-aminobenzyl)malonyl-CoA to 2-aminocinnamoyl-CoA and CO(2). In vitro, shows high catalytic efficiency with benzylmalonyl-CoA, a chemical analog of the physiological substrate, but otherwise accepts only a few medium-chain alkylmalonyl-CoA compounds as alternative substrates with low activities. This is Benzylmalonyl-CoA dehydrogenase from Aromatoleum aromaticum (strain DSM 19018 / LMG 30748 / EbN1) (Azoarcus sp. (strain EbN1)).